The sequence spans 96 residues: Non-specific lipid-transfer protein 2 (96 aa).

Residues 1–27 (MMRRLAVLVLAVAMVAACGGGVVGVAG) form the signal peptide. 4 cysteine pairs are disulfide-bonded: Cys30/Cys62, Cys38/Cys52, Cys53/Cys88, and Cys64/Cys95.

Belongs to the plant LTP family. B11E subfamily.

Transfer lipids across membranes. May play a role in plant defense or in the biosynthesis of cuticle layers. This Oryza sativa subsp. indica (Rice) protein is Non-specific lipid-transfer protein 2 (LTP-2).